A 122-amino-acid polypeptide reads, in one-letter code: Large ribosomal subunit protein uL14 (122 aa).

Belongs to the universal ribosomal protein uL14 family. Part of the 50S ribosomal subunit. Forms a cluster with proteins L3 and L19. In the 70S ribosome, L14 and L19 interact and together make contacts with the 16S rRNA in bridges B5 and B8.

Binds to 23S rRNA. Forms part of two intersubunit bridges in the 70S ribosome. In Mycoplasma mobile (strain ATCC 43663 / 163K / NCTC 11711) (Mesomycoplasma mobile), this protein is Large ribosomal subunit protein uL14.